The primary structure comprises 292 residues: AKT-interacting protein homolog B (292 aa).

The interval 1–44 (MNPFWNMPSASVRKRSDNDEKIATADQKISPARSSSAKKQLPSI) is disordered. Residues 14–23 (KRSDNDEKIA) are compositionally biased toward basic and acidic residues. The region spanning 75–223 (YLEYSLLAEF…VVDSVKLCNS (149 aa)) is the UBC core domain.

It belongs to the ubiquitin-conjugating enzyme family. FTS subfamily.

It is found in the cytoplasm. It localises to the cell membrane. Its function is as follows. May function to promote vesicle trafficking and/or fusion. May also regulate apoptosis. This is AKT-interacting protein homolog B (aktip-b) from Xenopus laevis (African clawed frog).